A 321-amino-acid polypeptide reads, in one-letter code: Lipoyl synthase (321 aa).

Residues C68, C73, C79, C94, C98, C101, and S308 each contribute to the [4Fe-4S] cluster site. The 218-residue stretch at 80–297 (FNHGTATFMI…KEVALELGFT (218 aa)) folds into the Radical SAM core domain.

Belongs to the radical SAM superfamily. Lipoyl synthase family. Requires [4Fe-4S] cluster as cofactor.

The protein resides in the cytoplasm. It carries out the reaction [[Fe-S] cluster scaffold protein carrying a second [4Fe-4S](2+) cluster] + N(6)-octanoyl-L-lysyl-[protein] + 2 oxidized [2Fe-2S]-[ferredoxin] + 2 S-adenosyl-L-methionine + 4 H(+) = [[Fe-S] cluster scaffold protein] + N(6)-[(R)-dihydrolipoyl]-L-lysyl-[protein] + 4 Fe(3+) + 2 hydrogen sulfide + 2 5'-deoxyadenosine + 2 L-methionine + 2 reduced [2Fe-2S]-[ferredoxin]. It functions in the pathway protein modification; protein lipoylation via endogenous pathway; protein N(6)-(lipoyl)lysine from octanoyl-[acyl-carrier-protein]: step 2/2. In terms of biological role, catalyzes the radical-mediated insertion of two sulfur atoms into the C-6 and C-8 positions of the octanoyl moiety bound to the lipoyl domains of lipoate-dependent enzymes, thereby converting the octanoylated domains into lipoylated derivatives. This is Lipoyl synthase from Vibrio cholerae serotype O1 (strain ATCC 39315 / El Tor Inaba N16961).